Consider the following 110-residue polypeptide: Thiosulfate sulfurtransferase GlpE (110 aa).

A Rhodanese domain is found at 17–105 (RENGAQVVDI…WRSVYPADTS (89 aa)). The active-site Cysteine persulfide intermediate is C65.

It belongs to the GlpE family.

The protein localises to the cytoplasm. It catalyses the reaction thiosulfate + hydrogen cyanide = thiocyanate + sulfite + 2 H(+). The enzyme catalyses thiosulfate + [thioredoxin]-dithiol = [thioredoxin]-disulfide + hydrogen sulfide + sulfite + 2 H(+). Functionally, transferase that catalyzes the transfer of sulfur from thiosulfate to thiophilic acceptors such as cyanide or dithiols. May function in a CysM-independent thiosulfate assimilation pathway by catalyzing the conversion of thiosulfate to sulfite, which can then be used for L-cysteine biosynthesis. This Pseudomonas aeruginosa (strain LESB58) protein is Thiosulfate sulfurtransferase GlpE.